Here is a 177-residue protein sequence, read N- to C-terminus: ATP synthase subunit delta (177 aa).

It belongs to the ATPase delta chain family. In terms of assembly, F-type ATPases have 2 components, F(1) - the catalytic core - and F(0) - the membrane proton channel. F(1) has five subunits: alpha(3), beta(3), gamma(1), delta(1), epsilon(1). F(0) has three main subunits: a(1), b(2) and c(10-14). The alpha and beta chains form an alternating ring which encloses part of the gamma chain. F(1) is attached to F(0) by a central stalk formed by the gamma and epsilon chains, while a peripheral stalk is formed by the delta and b chains.

Its subcellular location is the cell membrane. Functionally, f(1)F(0) ATP synthase produces ATP from ADP in the presence of a proton or sodium gradient. F-type ATPases consist of two structural domains, F(1) containing the extramembraneous catalytic core and F(0) containing the membrane proton channel, linked together by a central stalk and a peripheral stalk. During catalysis, ATP synthesis in the catalytic domain of F(1) is coupled via a rotary mechanism of the central stalk subunits to proton translocation. Its function is as follows. This protein is part of the stalk that links CF(0) to CF(1). It either transmits conformational changes from CF(0) to CF(1) or is implicated in proton conduction. The polypeptide is ATP synthase subunit delta (Macrococcus caseolyticus (strain JCSC5402) (Macrococcoides caseolyticum)).